The chain runs to 282 residues: Light-independent protochlorophyllide reductase iron-sulfur ATP-binding protein (282 aa).

ATP contacts are provided by residues 10–15 (GIGKST) and lysine 39. Serine 14 serves as a coordination point for Mg(2+). Residues cysteine 95 and cysteine 129 each coordinate [4Fe-4S] cluster. 180 to 181 (NR) contributes to the ATP binding site.

Belongs to the NifH/BchL/ChlL family. As to quaternary structure, homodimer. Protochlorophyllide reductase is composed of three subunits; ChlL, ChlN and ChlB. [4Fe-4S] cluster serves as cofactor.

It is found in the plastid. The protein resides in the cyanelle. The catalysed reaction is chlorophyllide a + oxidized 2[4Fe-4S]-[ferredoxin] + 2 ADP + 2 phosphate = protochlorophyllide a + reduced 2[4Fe-4S]-[ferredoxin] + 2 ATP + 2 H2O. The protein operates within porphyrin-containing compound metabolism; chlorophyll biosynthesis (light-independent). Functionally, component of the dark-operative protochlorophyllide reductase (DPOR) that uses Mg-ATP and reduced ferredoxin to reduce ring D of protochlorophyllide (Pchlide) to form chlorophyllide a (Chlide). This reaction is light-independent. The L component serves as a unique electron donor to the NB-component of the complex, and binds Mg-ATP. The chain is Light-independent protochlorophyllide reductase iron-sulfur ATP-binding protein from Cyanophora paradoxa.